The sequence spans 301 residues: Pseudouridine-5'-phosphate glycosidase (301 aa).

Residue Glu-25 is the Proton donor of the active site. The substrate site is built by Lys-86 and Val-106. Asp-138 provides a ligand contact to Mn(2+). A substrate-binding site is contributed by 140–142 (SAD). The active-site Nucleophile is Lys-159.

The protein belongs to the pseudouridine-5'-phosphate glycosidase family. In terms of assembly, homotrimer. Requires Mn(2+) as cofactor.

It carries out the reaction D-ribose 5-phosphate + uracil = psi-UMP + H2O. Catalyzes the reversible cleavage of pseudouridine 5'-phosphate (PsiMP) to ribose 5-phosphate and uracil. Functions biologically in the cleavage direction, as part of a pseudouridine degradation pathway. This Geobacillus kaustophilus (strain HTA426) protein is Pseudouridine-5'-phosphate glycosidase.